The chain runs to 702 residues: Glucoamylase (702 aa).

A signal peptide spans 1 to 21 (MSRKLIKYLPLLVLASSVLSG). C22 carries N-palmitoyl cysteine lipidation. C22 carries S-diacylglycerol cysteine lipidation. Substrate is bound at residue W342. The active-site Proton acceptor is the E452. E455 functions as the Proton donor in the catalytic mechanism.

It belongs to the glycosyl hydrolase 15 family.

It is found in the cell membrane. The enzyme catalyses Hydrolysis of terminal (1-&gt;4)-linked alpha-D-glucose residues successively from non-reducing ends of the chains with release of beta-D-glucose.. Functionally, CGA has typical kinetic properties for a glucoamylase, but this bacterial enzyme had higher isomaltose-hydrolyzing activity than other eukaryotic glucoamylases. The chain is Glucoamylase (cga) from Clostridium sp. (strain G0005).